A 338-amino-acid polypeptide reads, in one-letter code: Lipoate-protein ligase A (338 aa).

The BPL/LPL catalytic domain maps to 29 to 216 (PATQRVLFLW…AFFAHYGERV (188 aa)). ATP-binding positions include R71, 76–79 (GAVF), and K134. K134 contributes to the (R)-lipoate binding site.

This sequence belongs to the LplA family. Monomer.

The protein resides in the cytoplasm. The catalysed reaction is L-lysyl-[lipoyl-carrier protein] + (R)-lipoate + ATP = N(6)-[(R)-lipoyl]-L-lysyl-[lipoyl-carrier protein] + AMP + diphosphate + H(+). The protein operates within protein modification; protein lipoylation via exogenous pathway; protein N(6)-(lipoyl)lysine from lipoate: step 1/2. Its pathway is protein modification; protein lipoylation via exogenous pathway; protein N(6)-(lipoyl)lysine from lipoate: step 2/2. Catalyzes both the ATP-dependent activation of exogenously supplied lipoate to lipoyl-AMP and the transfer of the activated lipoyl onto the lipoyl domains of lipoate-dependent enzymes. This Escherichia coli O9:H4 (strain HS) protein is Lipoate-protein ligase A.